The following is a 565-amino-acid chain: Ubiquitin carboxyl-terminal hydrolase 21 (565 aa).

Positions 1–14 are enriched in basic and acidic residues; sequence MPQASEHRLGRTRE. Disordered regions lie at residues 1–103, 109–128, and 142–163; these read MPQA…LPLP, ARSKSVSSGDLRPMGIALGG, and LALRPEPPPLRRSTSLRRLGGF. A compositionally biased stretch (pro residues) spans 42 to 57; that stretch reads APGPNPMLRPLPPRPG. Over residues 58–70 the composition is skewed to basic and acidic residues; the sequence is PPEERLKKLELGR. Low complexity predominate over residues 71–82; sequence GRTSGPRPSGPL. The Nuclear export signal motif lies at 134-152; it reads ELGAALSRLALRPEPPPLR. The USP domain occupies 212 to 558; the sequence is VGLRNLGNTC…EGYVLFYQLM (347 aa). The Nucleophile role is filled by cysteine 221. 4 residues coordinate Zn(2+): cysteine 384, cysteine 387, cysteine 437, and cysteine 440. Histidine 518 serves as the catalytic Proton acceptor.

It belongs to the peptidase C19 family. USP21 subfamily. Interacts with BEND3.

The protein resides in the cytoplasm. It is found in the nucleus. The catalysed reaction is Thiol-dependent hydrolysis of ester, thioester, amide, peptide and isopeptide bonds formed by the C-terminal Gly of ubiquitin (a 76-residue protein attached to proteins as an intracellular targeting signal).. Its function is as follows. Deubiquitinating enzyme that hydrolyzes 'Lys-6'- and 'Lys-11'-linked polyubiquitin. Also hydrolyzes heterotypic (mixed and branched) and homotypic chains. Important regulator of energy metabolism. Glucose and fatty acids trigger its nuclear translocation by CBP-dependent acetylation. In the nucleus, deubiquitinates and stabilizes the nuclear receptor PPARD regulating the expression of various genes involved in glucose and lipid metabolism and oxidative phosphorylation. Also acts as a negative regulator of the ribosome quality control (RQC) by mediating deubiquitination of 40S ribosomal proteins RPS10/eS10 and RPS20/uS10, thereby antagonizing ZNF598-mediated 40S ubiquitination. The protein is Ubiquitin carboxyl-terminal hydrolase 21 (USP21) of Bos taurus (Bovine).